A 320-amino-acid polypeptide reads, in one-letter code: o-succinylbenzoate synthase (320 aa).

Catalysis depends on Lys-133, which acts as the Proton donor. The Mg(2+) site is built by Asp-161, Glu-190, and Asp-213. The Proton acceptor role is filled by Lys-235.

It belongs to the mandelate racemase/muconate lactonizing enzyme family. MenC type 1 subfamily. It depends on a divalent metal cation as a cofactor.

It catalyses the reaction (1R,6R)-6-hydroxy-2-succinyl-cyclohexa-2,4-diene-1-carboxylate = 2-succinylbenzoate + H2O. It functions in the pathway quinol/quinone metabolism; 1,4-dihydroxy-2-naphthoate biosynthesis; 1,4-dihydroxy-2-naphthoate from chorismate: step 4/7. It participates in quinol/quinone metabolism; menaquinone biosynthesis. Its function is as follows. Converts 2-succinyl-6-hydroxy-2,4-cyclohexadiene-1-carboxylate (SHCHC) to 2-succinylbenzoate (OSB). In Escherichia coli O139:H28 (strain E24377A / ETEC), this protein is o-succinylbenzoate synthase.